Here is a 148-residue protein sequence, read N- to C-terminus: Cystatin-C (148 aa).

A signal peptide spans 1–28 (MARSLGVPLLLLAALVVALALAVSPAAG). A Secondary area of contact motif is present at residues 83 to 87 (QIVSG). 2 disulfides stabilise this stretch: Cys-101–Cys-111 and Cys-125–Cys-145.

This sequence belongs to the cystatin family.

The protein resides in the secreted. This is a thiol proteinase inhibitor. The protein is Cystatin-C (CST3) of Oryctolagus cuniculus (Rabbit).